A 1095-amino-acid polypeptide reads, in one-letter code: DNA-directed RNA polymerase subunit beta'' (1095 aa).

C220, C293, C300, and C303 together coordinate Zn(2+).

It belongs to the RNA polymerase beta' chain family. RpoC2 subfamily. In plastids the minimal PEP RNA polymerase catalytic core is composed of four subunits: alpha, beta, beta', and beta''. When a (nuclear-encoded) sigma factor is associated with the core the holoenzyme is formed, which can initiate transcription. Zn(2+) is required as a cofactor.

It localises to the plastid. It is found in the chloroplast. It carries out the reaction RNA(n) + a ribonucleoside 5'-triphosphate = RNA(n+1) + diphosphate. Its function is as follows. DNA-dependent RNA polymerase catalyzes the transcription of DNA into RNA using the four ribonucleoside triphosphates as substrates. The polypeptide is DNA-directed RNA polymerase subunit beta'' (Zygnema circumcarinatum (Green alga)).